The primary structure comprises 175 residues: CDP-archaeol synthase (175 aa).

Helical transmembrane passes span 41 to 61, 82 to 102, 122 to 142, and 150 to 170; these read GLFS…WLSF, LIVV…KSFF, FVVG…VSNF, and VIII…FIGV.

The protein belongs to the CDP-archaeol synthase family. It depends on Mg(2+) as a cofactor.

The protein resides in the cell membrane. It carries out the reaction 2,3-bis-O-(geranylgeranyl)-sn-glycerol 1-phosphate + CTP + H(+) = CDP-2,3-bis-O-(geranylgeranyl)-sn-glycerol + diphosphate. It participates in membrane lipid metabolism; glycerophospholipid metabolism. Functionally, catalyzes the formation of CDP-2,3-bis-(O-geranylgeranyl)-sn-glycerol (CDP-archaeol) from 2,3-bis-(O-geranylgeranyl)-sn-glycerol 1-phosphate (DGGGP) and CTP. This reaction is the third ether-bond-formation step in the biosynthesis of archaeal membrane lipids. The chain is CDP-archaeol synthase from Methanosarcina mazei (strain ATCC BAA-159 / DSM 3647 / Goe1 / Go1 / JCM 11833 / OCM 88) (Methanosarcina frisia).